A 182-amino-acid chain; its full sequence is Peptidoglycan-recognition protein SB2 (182 aa).

The N-terminal stretch at 1–17 is a signal peptide; it reads MKLQLALVLCGLTLALG. The N-acetylmuramoyl-L-alanine amidase domain maps to 40–165; it reads PVRLIIIHHT…CQTKATACPG (126 aa). A Zn(2+)-binding site is contributed by H47. C54 and C60 are joined by a disulfide. N149 carries an N-linked (GlcNAc...) asparagine glycan. The Zn(2+) site is built by H155 and C163.

Belongs to the N-acetylmuramoyl-L-alanine amidase 2 family. It depends on Zn(2+) as a cofactor.

Its subcellular location is the secreted. It carries out the reaction Hydrolyzes the link between N-acetylmuramoyl residues and L-amino acid residues in certain cell-wall glycopeptides.. In terms of biological role, N-acetylmuramyl-L-alanine amidase involved in innate immunity by degrading bacterial peptidoglycans (PGN). Probably plays a scavenger role by digesting biologically active PGN into biologically inactive fragments. Has no direct bacteriolytic activity. This chain is Peptidoglycan-recognition protein SB2 (PGRP-SB2), found in Drosophila simulans (Fruit fly).